We begin with the raw amino-acid sequence, 181 residues long: MMRLKEKYTQNIKPALVKEFDIKNPMLIPFIEKVVISVGAGELAKDQKVLQNVADTISLIAGQKAVITKAKKSVAGFKVREGFPVGVMVTLRKDNMYAFLDKLITIALPRVKDFRGLPRDGFDGRGNYNFGLDEQLMFPEVEYDKILRTHGMNISIVTTAKSDKEAQKLLELFGVPFAKGK.

Belongs to the universal ribosomal protein uL5 family. In terms of assembly, part of the 50S ribosomal subunit; part of the 5S rRNA/L5/L18/L25 subcomplex. Contacts the 5S rRNA and the P site tRNA. Forms a bridge to the 30S subunit in the 70S ribosome.

This is one of the proteins that bind and probably mediate the attachment of the 5S RNA into the large ribosomal subunit, where it forms part of the central protuberance. In the 70S ribosome it contacts protein S13 of the 30S subunit (bridge B1b), connecting the 2 subunits; this bridge is implicated in subunit movement. Contacts the P site tRNA; the 5S rRNA and some of its associated proteins might help stabilize positioning of ribosome-bound tRNAs. The polypeptide is Large ribosomal subunit protein uL5 (Campylobacter lari (strain RM2100 / D67 / ATCC BAA-1060)).